The sequence spans 355 residues: MPVLHNRISNEELKARMLAETEPRTTVSFYKYFTIDDPKAFRDRLYIQLEQCKVLGRIYIATEGINAQISVPNNQFDAFKAVLFSAHPALDQIRLNIALEDDGKSFWVLRMKVRERIVADGIDDPTFNPANVGQYLKADQVNAMADDPDTVFVDMRNHYEYEVGHFENALEVPSDTFREQLPMAVEMLDEARDKNIVMYCTGGIRCEKASAYMLHHGFKNVYHVEGGIIEYARQAKAQGLPLKFIGKNFVFDERMGERISDDVIAHCHQCGASCDSHTNCRNEGCHLLFIQCPTCAAKYEGCCSTQCLDEMKLPLEEQRAIRSGRENGMKIFNKSKGLLQSTLHIPAPEVKDKAE.

The Rhodanese domain maps to 146 to 240 (DDPDTVFVDM…YARQAKAQGL (95 aa)). Cysteine 200 functions as the Cysteine persulfide intermediate in the catalytic mechanism.

It belongs to the TrhO family.

The enzyme catalyses uridine(34) in tRNA + AH2 + O2 = 5-hydroxyuridine(34) in tRNA + A + H2O. In terms of biological role, catalyzes oxygen-dependent 5-hydroxyuridine (ho5U) modification at position 34 in tRNAs. This chain is tRNA uridine(34) hydroxylase, found in Pectobacterium carotovorum subsp. carotovorum (strain PC1).